The following is a 120-amino-acid chain: MGTLQEYDYLWFFLVIASIVPILAFTISEILAPIRSGPEKLTSYESGIEPKGQAWIQFHIRYYMFALVFVVFDVETVFLYPWAISFHSLGISAFIEALLFILILMVGLVYAWRKGALEWS.

The next 3 membrane-spanning stretches (helical) occupy residues 10 to 30 (LWFF…ISEI), 64 to 84 (MFAL…PWAI), and 89 to 109 (LGIS…VGLV).

The protein belongs to the complex I subunit 3 family. In terms of assembly, NDH is composed of at least 16 different subunits, 5 of which are encoded in the nucleus.

Its subcellular location is the plastid. It localises to the chloroplast thylakoid membrane. It catalyses the reaction a plastoquinone + NADH + (n+1) H(+)(in) = a plastoquinol + NAD(+) + n H(+)(out). The catalysed reaction is a plastoquinone + NADPH + (n+1) H(+)(in) = a plastoquinol + NADP(+) + n H(+)(out). NDH shuttles electrons from NAD(P)H:plastoquinone, via FMN and iron-sulfur (Fe-S) centers, to quinones in the photosynthetic chain and possibly in a chloroplast respiratory chain. The immediate electron acceptor for the enzyme in this species is believed to be plastoquinone. Couples the redox reaction to proton translocation, and thus conserves the redox energy in a proton gradient. This chain is NAD(P)H-quinone oxidoreductase subunit 3, chloroplastic, found in Chara vulgaris (Common stonewort).